The chain runs to 81 residues: ATP synthase subunit c, chloroplastic (81 aa).

2 helical membrane passes run 3–23 and 57–77; these read PIISAASVIAAGLAVGLASIG and LAFMEALTIYGLVVALALLFA.

This sequence belongs to the ATPase C chain family. As to quaternary structure, F-type ATPases have 2 components, F(1) - the catalytic core - and F(0) - the membrane proton channel. F(1) has five subunits: alpha(3), beta(3), gamma(1), delta(1), epsilon(1). F(0) has four main subunits: a(1), b(1), b'(1) and c(10-14). The alpha and beta chains form an alternating ring which encloses part of the gamma chain. F(1) is attached to F(0) by a central stalk formed by the gamma and epsilon chains, while a peripheral stalk is formed by the delta, b and b' chains.

The protein resides in the plastid. The protein localises to the chloroplast thylakoid membrane. F(1)F(0) ATP synthase produces ATP from ADP in the presence of a proton or sodium gradient. F-type ATPases consist of two structural domains, F(1) containing the extramembraneous catalytic core and F(0) containing the membrane proton channel, linked together by a central stalk and a peripheral stalk. During catalysis, ATP synthesis in the catalytic domain of F(1) is coupled via a rotary mechanism of the central stalk subunits to proton translocation. Its function is as follows. Key component of the F(0) channel; it plays a direct role in translocation across the membrane. A homomeric c-ring of between 10-14 subunits forms the central stalk rotor element with the F(1) delta and epsilon subunits. The chain is ATP synthase subunit c, chloroplastic from Welwitschia mirabilis (Tree tumbo).